The primary structure comprises 311 residues: Methionyl-tRNA formyltransferase (311 aa).

A (6S)-5,6,7,8-tetrahydrofolate-binding site is contributed by 112 to 115 (SLLP).

The protein belongs to the Fmt family.

The catalysed reaction is L-methionyl-tRNA(fMet) + (6R)-10-formyltetrahydrofolate = N-formyl-L-methionyl-tRNA(fMet) + (6S)-5,6,7,8-tetrahydrofolate + H(+). Its function is as follows. Attaches a formyl group to the free amino group of methionyl-tRNA(fMet). The formyl group appears to play a dual role in the initiator identity of N-formylmethionyl-tRNA by promoting its recognition by IF2 and preventing the misappropriation of this tRNA by the elongation apparatus. In Sinorhizobium fredii (strain NBRC 101917 / NGR234), this protein is Methionyl-tRNA formyltransferase.